The sequence spans 154 residues: MutT-like protein (154 aa).

The Nudix hydrolase domain occupies 15-136 (PLHSVSVAGV…YAIRLLDALD (122 aa)). Positions 48, 63, 66, and 67 each coordinate Mg(2+). Residues 48–69 (GVLELDETPETGVAREVWEETG) carry the Nudix box motif.

Belongs to the Nudix hydrolase family.

The protein is MutT-like protein of Streptomyces ambofaciens.